Here is a 113-residue protein sequence, read N- to C-terminus: UPF0122 protein Sez_1013 (113 aa).

It belongs to the UPF0122 family.

In terms of biological role, might take part in the signal recognition particle (SRP) pathway. This is inferred from the conservation of its genetic proximity to ftsY/ffh. May be a regulatory protein. The polypeptide is UPF0122 protein Sez_1013 (Streptococcus equi subsp. zooepidemicus (strain MGCS10565)).